Here is a 409-residue protein sequence, read N- to C-terminus: Spermatogenesis-associated protein 2-like protein (409 aa).

Disordered regions lie at residues 233–257, 270–299, and 313–337; these read EDEG…TSEL, LWGA…PQPE, and RPGD…IPEP.

The protein belongs to the SPATA2 family.

The chain is Spermatogenesis-associated protein 2-like protein (SPATA2L) from Bos taurus (Bovine).